We begin with the raw amino-acid sequence, 77 residues long: Liver-expressed antimicrobial peptide 2 (77 aa).

Positions 1–22 (MWHLKLCAVLMIFLLLLGQTDG) are cleaved as a signal peptide. Positions 23-37 (SPIPEVSSAKRRPRR) are excised as a propeptide. Intrachain disulfides connect cysteine 54–cysteine 65 and cysteine 60–cysteine 70.

Belongs to the LEAP2 family.

Its subcellular location is the secreted. Its function is as follows. Has an antimicrobial activity. The chain is Liver-expressed antimicrobial peptide 2 (LEAP2) from Macaca mulatta (Rhesus macaque).